The following is a 473-amino-acid chain: Serine/threonine-protein phosphatase T (473 aa).

TPR repeat units follow at residues 5–38 (ALEL…DSTN), 40–72 (ILYS…DPEY), and 73–106 (AKAY…APSD). A catalytic region spans residues 159–472 (KQITKEFVED…MAYANGLLSG (314 aa)). Mn(2+) is bound by residues Asp-217, His-219, Asp-246, and Asn-278. His-279 acts as the Proton donor/acceptor in catalysis. Residues His-327 and His-404 each coordinate Mn(2+).

It belongs to the PPP phosphatase family. PP-5 (PP-T) subfamily. Mg(2+) serves as cofactor. Requires Mn(2+) as cofactor.

The protein resides in the nucleus. It carries out the reaction O-phospho-L-seryl-[protein] + H2O = L-seryl-[protein] + phosphate. It catalyses the reaction O-phospho-L-threonyl-[protein] + H2O = L-threonyl-[protein] + phosphate. In terms of biological role, protein phosphatase that specifically binds to and dephosphorylates the molecular chaperone Hsp90. Dephosphorylation positively regulates the Hsp90 chaperone machinery. The sequence is that of Serine/threonine-protein phosphatase T (ppt1) from Schizosaccharomyces pombe (strain 972 / ATCC 24843) (Fission yeast).